The chain runs to 210 residues: ATP-dependent Clp protease proteolytic subunit (210 aa).

Ser114 serves as the catalytic Nucleophile. His139 is an active-site residue.

It belongs to the peptidase S14 family. Fourteen ClpP subunits assemble into 2 heptameric rings which stack back to back to give a disk-like structure with a central cavity, resembling the structure of eukaryotic proteasomes.

It localises to the cytoplasm. It catalyses the reaction Hydrolysis of proteins to small peptides in the presence of ATP and magnesium. alpha-casein is the usual test substrate. In the absence of ATP, only oligopeptides shorter than five residues are hydrolyzed (such as succinyl-Leu-Tyr-|-NHMec, and Leu-Tyr-Leu-|-Tyr-Trp, in which cleavage of the -Tyr-|-Leu- and -Tyr-|-Trp bonds also occurs).. Cleaves peptides in various proteins in a process that requires ATP hydrolysis. Has a chymotrypsin-like activity. Plays a major role in the degradation of misfolded proteins. The polypeptide is ATP-dependent Clp protease proteolytic subunit (Janthinobacterium sp. (strain Marseille) (Minibacterium massiliensis)).